A 327-amino-acid polypeptide reads, in one-letter code: tRNA N6-adenosine threonylcarbamoyltransferase (327 aa).

Positions 109 and 113 each coordinate Fe cation. Substrate contacts are provided by residues 132–136 (MVSGG), Asp165, Gly178, Asp182, and Asn268. Position 296 (Asp296) interacts with Fe cation.

The protein belongs to the KAE1 / TsaD family. The cofactor is Fe(2+).

The protein resides in the cytoplasm. It carries out the reaction L-threonylcarbamoyladenylate + adenosine(37) in tRNA = N(6)-L-threonylcarbamoyladenosine(37) in tRNA + AMP + H(+). In terms of biological role, required for the formation of a threonylcarbamoyl group on adenosine at position 37 (t(6)A37) in tRNAs that read codons beginning with adenine. Is involved in the transfer of the threonylcarbamoyl moiety of threonylcarbamoyl-AMP (TC-AMP) to the N6 group of A37, together with TsaE and TsaB. TsaD likely plays a direct catalytic role in this reaction. This is tRNA N6-adenosine threonylcarbamoyltransferase from Thermotoga petrophila (strain ATCC BAA-488 / DSM 13995 / JCM 10881 / RKU-1).